Consider the following 138-residue polypeptide: ATP synthase epsilon chain (138 aa).

This sequence belongs to the ATPase epsilon chain family. As to quaternary structure, F-type ATPases have 2 components, CF(1) - the catalytic core - and CF(0) - the membrane proton channel. CF(1) has five subunits: alpha(3), beta(3), gamma(1), delta(1), epsilon(1). CF(0) has three main subunits: a, b and c.

It localises to the cell inner membrane. Produces ATP from ADP in the presence of a proton gradient across the membrane. The sequence is that of ATP synthase epsilon chain from Citrifermentans bemidjiense (strain ATCC BAA-1014 / DSM 16622 / JCM 12645 / Bem) (Geobacter bemidjiensis).